The chain runs to 411 residues: LL-diaminopimelate aminotransferase (411 aa).

Positions 15 and 42 each coordinate substrate. Pyridoxal 5'-phosphate is bound by residues Y72, 108–109, Y132, N187, Y218, and 246–248; these read SK and SFS. The substrate site is built by K109, Y132, and N187. K249 is modified (N6-(pyridoxal phosphate)lysine). The pyridoxal 5'-phosphate site is built by R257 and N292. Residues N292 and R388 each contribute to the substrate site.

This sequence belongs to the class-I pyridoxal-phosphate-dependent aminotransferase family. LL-diaminopimelate aminotransferase subfamily. As to quaternary structure, homodimer. Requires pyridoxal 5'-phosphate as cofactor.

It carries out the reaction (2S,6S)-2,6-diaminopimelate + 2-oxoglutarate = (S)-2,3,4,5-tetrahydrodipicolinate + L-glutamate + H2O + H(+). It functions in the pathway amino-acid biosynthesis; L-lysine biosynthesis via DAP pathway; LL-2,6-diaminopimelate from (S)-tetrahydrodipicolinate (aminotransferase route): step 1/1. Its function is as follows. Involved in the synthesis of meso-diaminopimelate (m-DAP or DL-DAP), required for both lysine and peptidoglycan biosynthesis. Catalyzes the direct conversion of tetrahydrodipicolinate to LL-diaminopimelate. The sequence is that of LL-diaminopimelate aminotransferase from Trichodesmium erythraeum (strain IMS101).